The primary structure comprises 182 residues: NADH-quinone oxidoreductase subunit I (182 aa).

4Fe-4S ferredoxin-type domains are found at residues 52–82 (LTRDPDGEERCVACNLCAVACPVGCISLQKA) and 92–121 (EFFRINFSRCIFCGLCEEACPTTAIQLTPD). Residues Cys62, Cys65, Cys68, Cys72, Cys101, Cys104, Cys107, and Cys111 each coordinate [4Fe-4S] cluster.

Belongs to the complex I 23 kDa subunit family. NDH-1 is composed of 13 different subunits. Subunits NuoA, H, J, K, L, M, N constitute the membrane sector of the complex. [4Fe-4S] cluster serves as cofactor.

Its subcellular location is the cell inner membrane. It carries out the reaction a quinone + NADH + 5 H(+)(in) = a quinol + NAD(+) + 4 H(+)(out). Its function is as follows. NDH-1 shuttles electrons from NADH, via FMN and iron-sulfur (Fe-S) centers, to quinones in the respiratory chain. The immediate electron acceptor for the enzyme in this species is believed to be ubiquinone. Couples the redox reaction to proton translocation (for every two electrons transferred, four hydrogen ions are translocated across the cytoplasmic membrane), and thus conserves the redox energy in a proton gradient. The sequence is that of NADH-quinone oxidoreductase subunit I from Pseudomonas putida (strain ATCC 47054 / DSM 6125 / CFBP 8728 / NCIMB 11950 / KT2440).